The chain runs to 353 residues: Photosystem II protein D1 (353 aa).

Position 2 is an N-acetylthreonine (T2). T2 is modified (phosphothreonine). The next 3 membrane-spanning stretches (helical) occupy residues 29–46, 118–133, and 142–156; these read YIGW…TATS, HFLL…EWEL, and WIAV…AATA. H118 provides a ligand contact to chlorophyll a. Y126 serves as a coordination point for pheophytin a. [CaMn4O5] cluster-binding residues include D170 and E189. A helical membrane pass occupies residues 197–218; the sequence is FHMLGVAGVFGSSLFSAMHGSL. H198 contacts chlorophyll a. A quinone contacts are provided by residues H215 and 264-265; that span reads SF. A Fe cation-binding site is contributed by H215. Residue H272 coordinates Fe cation. Residues 274–288 traverse the membrane as a helical segment; that stretch reads FLAAWPVVGIWFTAL. [CaMn4O5] cluster is bound by residues H332, E333, D342, and A344. The propeptide occupies 345-353; it reads AMEAPSVNG.

The protein belongs to the reaction center PufL/M/PsbA/D family. In terms of assembly, PSII is composed of 1 copy each of membrane proteins PsbA, PsbB, PsbC, PsbD, PsbE, PsbF, PsbH, PsbI, PsbJ, PsbK, PsbL, PsbM, PsbT, PsbX, PsbY, PsbZ, Psb30/Ycf12, at least 3 peripheral proteins of the oxygen-evolving complex and a large number of cofactors. It forms dimeric complexes. It depends on The D1/D2 heterodimer binds P680, chlorophylls that are the primary electron donor of PSII, and subsequent electron acceptors. It shares a non-heme iron and each subunit binds pheophytin, quinone, additional chlorophylls, carotenoids and lipids. D1 provides most of the ligands for the Mn4-Ca-O5 cluster of the oxygen-evolving complex (OEC). There is also a Cl(-1) ion associated with D1 and D2, which is required for oxygen evolution. The PSII complex binds additional chlorophylls, carotenoids and specific lipids. as a cofactor. Post-translationally, tyr-161 forms a radical intermediate that is referred to as redox-active TyrZ, YZ or Y-Z. C-terminally processed by CTPA; processing is essential to allow assembly of the oxygen-evolving complex and thus photosynthetic growth.

Its subcellular location is the plastid. It is found in the chloroplast thylakoid membrane. It catalyses the reaction 2 a plastoquinone + 4 hnu + 2 H2O = 2 a plastoquinol + O2. Functionally, photosystem II (PSII) is a light-driven water:plastoquinone oxidoreductase that uses light energy to abstract electrons from H(2)O, generating O(2) and a proton gradient subsequently used for ATP formation. It consists of a core antenna complex that captures photons, and an electron transfer chain that converts photonic excitation into a charge separation. The D1/D2 (PsbA/PsbD) reaction center heterodimer binds P680, the primary electron donor of PSII as well as several subsequent electron acceptors. This Vigna unguiculata (Cowpea) protein is Photosystem II protein D1.